A 468-amino-acid polypeptide reads, in one-letter code: Putative magnesium transporter MRS2-G (468 aa).

2 disordered regions span residues 1-76 and 183-204; these read MGRR…AGKV and GQPG…QVPR. Composition is skewed to low complexity over residues 14-23 and 31-45; these read ASNASTSSST and RLPS…SSPS. Pro residues predominate over residues 46-67; it reads PASPSPPPPSASHPAPPSPPLA. Basic and acidic residues predominate over residues 187-201; it reads GDDHGEKHDDSHGDQ. A run of 2 helical transmembrane segments spans residues 402-422 and 437-457; these read LTLT…GAFA and FFWP…IVLL.

It belongs to the CorA metal ion transporter (MIT) (TC 1.A.35.5) family. As to quaternary structure, interacts with CYCB2-2.

Its subcellular location is the membrane. Functionally, putative magnesium transporter. The chain is Putative magnesium transporter MRS2-G (MRS2-G) from Oryza sativa subsp. japonica (Rice).